The following is a 113-amino-acid chain: uncharacterized protein (113 aa).

The segment at 28–55 (CDGGPRRPLSRRGEEARRARAPSYEEQE) is disordered.

This is an uncharacterized protein from Human cytomegalovirus (strain AD169) (HHV-5).